The sequence spans 344 residues: MMVIRPVERRDVSALMQLASKTGGGLTSLPADEATLTSRIERALKTWRGELPKSEQGYVFVLEDSDTGSVAGICAIEVAVGLNDPWYNYRVGTLVHASKELNVYNALPTLFLSNDHTGSSELCTLFLDPDWRKEGNGYLLSKSRFMFMAAFRDKFNEKVVAEMRGVIDEHGYSPFWESLGERFFSMEFSRADYLCGTGQKAFIAELMPKHPIYTHFLSEEAQAVIGEVHPQTAPARTVLEKEGFRYRNYIDIFDGGPTLECDIDRVRAIRKSRLLDVVEGQPAPGEFPACLVANENYHHFRAMLIRTDPDTQRLVLTAAQLDALKCHAGDRVRLVRLCAEEKTA.

Succinyl-CoA is bound at residue leucine 125. Histidine 229 acts as the Proton donor in catalysis.

It belongs to the arginine N-succinyltransferase family.

It catalyses the reaction succinyl-CoA + L-arginine = N(2)-succinyl-L-arginine + CoA + H(+). The protein operates within amino-acid degradation; L-arginine degradation via AST pathway; L-glutamate and succinate from L-arginine: step 1/5. In terms of biological role, catalyzes the transfer of succinyl-CoA to arginine to produce N(2)-succinylarginine. The polypeptide is Arginine N-succinyltransferase (Citrobacter koseri (strain ATCC BAA-895 / CDC 4225-83 / SGSC4696)).